Here is a 521-residue protein sequence, read N- to C-terminus: Probable methylmalonate-semialdehyde/malonate-semialdehyde dehydrogenase [acylating], mitochondrial (521 aa).

5 residues coordinate NAD(+): phenylalanine 172, lysine 196, glutamate 199, arginine 200, and serine 249. The active-site Nucleophile is cysteine 304. NAD(+) is bound at residue glutamate 404.

It belongs to the aldehyde dehydrogenase family. In terms of assembly, homotetramer.

Its subcellular location is the mitochondrion. The catalysed reaction is 2-methyl-3-oxopropanoate + NAD(+) + CoA + H2O = propanoyl-CoA + hydrogencarbonate + NADH + H(+). It carries out the reaction 3-oxopropanoate + NAD(+) + CoA + H2O = hydrogencarbonate + acetyl-CoA + NADH + H(+). In terms of biological role, probable malonate and methylmalonate semialdehyde dehydrogenase involved in the catabolism of valine, thymine, and compounds catabolized by way of beta-alanine, including uracil and cytidine. This Aedes aegypti (Yellowfever mosquito) protein is Probable methylmalonate-semialdehyde/malonate-semialdehyde dehydrogenase [acylating], mitochondrial.